The primary structure comprises 805 residues: MFAKLETYPAALLELVATANDAAKAIPPLFPLSSSVAVNPFLGQTEEPLAVTAARLARVGGTKIMPERAHWAAKLEAGDITETDLTEALAALKGRFNCPSLDDVKAALTVPSPTPQALPTVAELAADVSGLDWPALIEDRISAWAAGHFDEGQALWQQAKTGGTFSAWRDFAARDLTPEIQGLSGFCAFVAATNRSHWRAIGRASERLNLGTEAASTAFHRWLMTLGGWAQYGRYLLWQDELNGAQNSTVTELLAIRMVFDEALFALYEDQISARWAEVVAAHQTPVTPTPDLVIDAIWQDAAERAEQRRLAETLQSGAVQPVEGRAEVQAAFCIDVRSEVFRRALEAQDRQIETLGFAGFFGLASAHKAAGSDVVETRGPVLLQAGVSSQAKEAEELDLDRRYSARAKRAWGRFKLAAVSSFAFVEASGPLYAGELIRDSLLLGGKTKAEPAPALDPSISLATRIQMAKTVLTAMSLTSDFAKLVVLAGHGADVTNSPHESALQCGACGGHAGDVNARLLAALLNDRDVQKGLRDQGIEIPSDTVFLPALHHTTTDEVTLYEQDLSSYALQISEATRGKLKGWLTEAGRLARAERAQRLPRASSEASVHMRARDWAETRPEWGLAGCRAFVAAPRARTSGADLGGQAFLHNYVWQRDEGFGVLELILTAPVVVASWISLQYYGSTVAPAQFGGGNKLLHNVVGGIGVLEGNTGAPRAGLPWQSVHDGDKVQHDPLRLSVVIEAPREAMSEILSRHPGVRALFDNGWLHLIAMDDEGKLAWRYRGDLKWSRFDAPQSTPSALAAE.

Zn(2+) contacts are provided by Cys334, Asp336, His491, and Cys506.

It belongs to the inorganic carbon transporter (TC 9.A.2) DabA family. In terms of assembly, forms a complex with DabB. It depends on Zn(2+) as a cofactor.

Its subcellular location is the cell inner membrane. In terms of biological role, part of an energy-coupled inorganic carbon pump. The sequence is that of Probable inorganic carbon transporter subunit DabA from Ruegeria sp. (strain TM1040) (Silicibacter sp.).